We begin with the raw amino-acid sequence, 117 residues long: Large ribosomal subunit protein bL19 (117 aa).

It belongs to the bacterial ribosomal protein bL19 family.

This protein is located at the 30S-50S ribosomal subunit interface and may play a role in the structure and function of the aminoacyl-tRNA binding site. The sequence is that of Large ribosomal subunit protein bL19 from Bacteroides fragilis (strain ATCC 25285 / DSM 2151 / CCUG 4856 / JCM 11019 / LMG 10263 / NCTC 9343 / Onslow / VPI 2553 / EN-2).